A 145-amino-acid chain; its full sequence is 5-hydroxymethyl-dUMP N-hydrolase (145 aa).

G7, I9, R10, G11, S79, G81, E85, and S109 together coordinate 5-hydroxymethyl-dUMP.

The protein belongs to the 2'-deoxynucleoside 5'-phosphate N-hydrolase 1 family. Monomer and homodimer.

It is found in the cytoplasm. The protein resides in the nucleus. The catalysed reaction is 5-hydroxymethyl-dUMP + H2O = 5-hydroxymethyluracil + 2-deoxy-D-ribose 5-phosphate. Its function is as follows. Part of a nucleotide salvage pathway that eliminates epigenetically modified 5-hydroxymethyl-dCMP (hmdCMP) in a two-step process entailing deamination to cytotoxic 5-hydroxymethyl-dUMP (hmdUMP), followed by its hydrolysis into 5-hydroxymethyluracil (hmU) and 2-deoxy-D-ribose 5-phosphate (deoxyribosephosphate). Catalyzes the second step in that pathway, the hydrolysis of the N-glycosidic bond in hmdUMP, degrading this cytotoxic nucleotide to avoid its genomic integration. This Esox lucius (Northern pike) protein is 5-hydroxymethyl-dUMP N-hydrolase.